The following is a 166-amino-acid chain: MSEWMKKSPLEWEDYVYKEVRVIACEKEYKGWLLTTDPVSANIVLVNFLEDGRLSVTGIMGHSVQTVETISEGDHRVREKLMHVFASGDCKGYSPEDLEEKRTSLKKWLEKNHIPVTEQGDAQRTLCVAGVLTIDPPYAPENCSSSNEIILSRIQDLIQGHLSASQ.

One can recognise a Sm domain in the interval 4–73 (WMKKSPLEWE…VQTVETISEG (70 aa)). The 99-residue stretch at 68–166 (ETISEGDHRV…LIQGHLSASQ (99 aa)) folds into the AD domain. Phosphoserine is present on residues Ser-94 and Ser-165.

As to quaternary structure, part of the core SMN complex that contains SMN1, GEMIN2/SIP1, DDX20/GEMIN3, GEMIN4, GEMIN5, GEMIN6, GEMIN7, GEMIN8 and STRAP/UNRIP. Part of the SMN-Sm complex that contains SMN1, GEMIN2/SIP1, DDX20/GEMIN3, GEMIN4, GEMIN5, GEMIN6, GEMIN7, GEMIN8, STRAP/UNRIP and the Sm proteins SNRPB, SNRPD1, SNRPD2, SNRPD3, SNRPE, SNRPF and SNRPG. Interacts with GEMIN7; the interaction is direct. Interacts with GEMIN8; the interaction is direct. Interacts with SNRPB, SNRPD2, SNRPD3 and SNRPE; the interaction is direct.

It is found in the nucleus. The protein resides in the nucleoplasm. The protein localises to the gem. It localises to the cytoplasm. In terms of biological role, the SMN complex catalyzes the assembly of small nuclear ribonucleoproteins (snRNPs), the building blocks of the spliceosome, and thereby plays an important role in the splicing of cellular pre-mRNAs. Most spliceosomal snRNPs contain a common set of Sm proteins SNRPB, SNRPD1, SNRPD2, SNRPD3, SNRPE, SNRPF and SNRPG that assemble in a heptameric protein ring on the Sm site of the small nuclear RNA to form the core snRNP (Sm core). In the cytosol, the Sm proteins SNRPD1, SNRPD2, SNRPE, SNRPF and SNRPG are trapped in an inactive 6S pICln-Sm complex by the chaperone CLNS1A that controls the assembly of the core snRNP. To assemble core snRNPs, the SMN complex accepts the trapped 5Sm proteins from CLNS1A forming an intermediate. Binding of snRNA inside 5Sm triggers eviction of the SMN complex, thereby allowing binding of SNRPD3 and SNRPB to complete assembly of the core snRNP. This is Gem-associated protein 6 (Gemin6) from Mus musculus (Mouse).